Consider the following 99-residue polypeptide: High mobility group nucleosome-binding domain-containing protein 3 (99 aa).

2 stretches are compositionally biased toward basic and acidic residues: residues 1 to 25 (MPKR…EPTR) and 39 to 53 (PESK…KEPG). The segment at 1 to 99 (MPKRKSPENT…RTESIEKEGE (99 aa)) is disordered. The residue at position 6 (S6) is a Phosphoserine. A Phosphothreonine modification is found at T10. Phosphoserine is present on residues S78 and S93. Over residues 83–99 (TKVEEAQRTESIEKEGE) the composition is skewed to basic and acidic residues.

This sequence belongs to the HMGN family. In terms of assembly, interacts with the ligand binding domain of the thyroid receptor (TR) (in vitro). Requires the presence of thyroid hormone for its interaction. Interacts with transcriptional regulator SEHBP. Interacts with nucleosomes. In terms of tissue distribution, expressed in the brain, eye, prostate, thyroid, kidney, testis, glial cells and insulin-producing cells of the Langerhans pancreatic islets. In the brain, expressed in the lateral olfactory tract, anterior commissure, corpus callosum, internal capsule, fornix, stria medullans, optic tract, axon bundles, Purkinje cell layer and granular layer of the cerebellum. In retina, expressed in the nuclei of cells in the inner nuclear layer including amacrine, bipolar and horizontal neurons and in the nuclei of ganglion neurons. Detected at low levels in the liver.

The protein localises to the nucleus. Binds to nucleosomes, regulating chromatin structure and consequently, chromatin-dependent processes such as transcription, DNA replication and DNA repair. Affects both insulin and glucagon levels and modulates the expression of pancreatic genes involved in insulin secretion. Regulates the expression of the glucose transporter SLC2A2 by binding specifically to its promoter region and recruiting PDX1 and additional transcription factors. Regulates the expression of SLC6A9, a glycine transporter which regulates the glycine concentration in synaptic junctions in the central nervous system, by binding to its transcription start site. May play a role in ocular development and astrocyte function. The sequence is that of High mobility group nucleosome-binding domain-containing protein 3 (Hmgn3) from Mus musculus (Mouse).